The sequence spans 308 residues: Ribosomal protein L11 methyltransferase (308 aa).

Positions 148, 169, 191, and 239 each coordinate S-adenosyl-L-methionine.

It belongs to the methyltransferase superfamily. PrmA family.

The protein resides in the cytoplasm. The enzyme catalyses L-lysyl-[protein] + 3 S-adenosyl-L-methionine = N(6),N(6),N(6)-trimethyl-L-lysyl-[protein] + 3 S-adenosyl-L-homocysteine + 3 H(+). In terms of biological role, methylates ribosomal protein L11. In Psychrobacter arcticus (strain DSM 17307 / VKM B-2377 / 273-4), this protein is Ribosomal protein L11 methyltransferase.